Reading from the N-terminus, the 425-residue chain is cAMP/cGMP-dependent 3',5'-cAMP/cGMP phosphodiesterase 7 (425 aa).

A signal peptide spans 1–17; it reads MKYLILILIFFIEINNG.

This sequence belongs to the cyclic nucleotide phosphodiesterase class-II family.

The protein localises to the secreted. The protein resides in the extracellular space. It localises to the cell surface. It catalyses the reaction 3',5'-cyclic AMP + H2O = AMP + H(+). The enzyme catalyses 3',5'-cyclic GMP + H2O = GMP + H(+). Inhibited by dithiotreitol (DTT). Phosphodiesterase with dual cAMP/cGMP specificity. However, displays a preference for cAMP over cGMP. Seems to regulate cAMP/cGMP concentration especially during cell aggregation. In Dictyostelium discoideum (Social amoeba), this protein is cAMP/cGMP-dependent 3',5'-cAMP/cGMP phosphodiesterase 7 (pde7).